The chain runs to 122 residues: UPF0102 protein cgR_1859 (122 aa).

The protein belongs to the UPF0102 family.

This is UPF0102 protein cgR_1859 from Corynebacterium glutamicum (strain R).